The sequence spans 396 residues: N-terminal EF-hand calcium-binding protein 3 (396 aa).

The segment covering 14–34 (PPAPQPQPQTPRHPQLAPDPG) has biased composition (pro residues). Residues 14 to 36 (PPAPQPQPQTPRHPQLAPDPGPA) are disordered. In terms of domain architecture, EF-hand spans 36-71 (AGHTLFQDVFRRADKNDDGKLSFEEFQNYFADGVLS). 5 residues coordinate Ca(2+): Asp-49, Asn-51, Asp-53, Lys-55, and Glu-60. Residues 181–190 (VEAQSRLCGS) are required for interaction with APBA3. A disordered region spans residues 197–220 (ALRSVSRSSTWSPGSSDTGRSSEA). Positions 206–217 (TWSPGSSDTGRS) are enriched in polar residues. Residues 296 to 385 (LMAQRQVQVA…RAPDTLTTVF (90 aa)) form the ABM domain.

As to quaternary structure, interacts with the N-terminal domain of APBA2. Interacts with NEK2. Interacts with APBA3; APBA3 seems to mediate the interaction between NECAB3 and HIF1AN. Phosphorylated by NEK2. In terms of tissue distribution, strongly expressed in heart and skeletal muscle, moderately in brain and pancreas.

It localises to the golgi apparatus. Its function is as follows. Inhibits the interaction of APBA2 with amyloid-beta precursor protein (APP), and hence allows formation of amyloid-beta. May enhance the activity of HIF1A and thus promote glycolysis under normoxic conditions; the function requires its ABM domain and may implicate the stabilization of the interaction between HIF1AN and APBA3. The sequence is that of N-terminal EF-hand calcium-binding protein 3 (NECAB3) from Homo sapiens (Human).